The following is a 398-amino-acid chain: Ubiquitin-like modifier-activating enzyme 5 (398 aa).

ATP contacts are provided by Gly79, Asp100, Lys123, Asn146, and Asn180. Residues Cys222 and Cys225 each contribute to the Zn(2+) site. Residue Cys246 is the Glycyl thioester intermediate of the active site. Positions 299 and 304 each coordinate Zn(2+). The UFM1-interacting sequence (UIS) motif lies at 330–342 (VVHEDNEWGIELV). The segment at 343-373 (SEVTEAELQDASGPIPDLPEGITVAYTIPEK) is linker. The short motif at 383–398 (ETEQSLEELMAQMKKI) is the UFC1-binding sequence (UFC) element.

Belongs to the ubiquitin-activating E1 family. UBA5 subfamily. Homodimer; homodimerization is required for ufm1 activation. Interacts (via UIS motif) with ufm1; binds ufm1 via a trans-binding mechanism in which ufm1 interacts with distinct sites in both subunits of the uba5 homodimer. Interacts (via C-terminus) with ufc1.

It localises to the cytoplasm. Its subcellular location is the nucleus. It is found in the endoplasmic reticulum membrane. The protein localises to the golgi apparatus. Functionally, E1-like enzyme which specifically catalyzes the first step in ufmylation. Activates ufm1 by first adenylating its C-terminal glycine residue with ATP, and thereafter linking this residue to the side chain of a cysteine residue in E1, yielding a ufm1-E1 thioester and free AMP. Activates ufm1 via a trans-binding mechanism, in which ufm1 interacts with distinct sites in both subunits of the uba5 homodimer. Trans-binding also promotes stabilization of the uba5 homodimer, and enhances ATP-binding. Transfer of ufm1 from uba5 to the E2-like enzyme UFC1 also takes place using a trans mechanism. Ufmylation plays a key role in various processes, such as ribosome recycling, response to DNA damage, interferon response or reticulophagy (also called ER-phagy). This is Ubiquitin-like modifier-activating enzyme 5 from Danio rerio (Zebrafish).